Consider the following 665-residue polypeptide: MDKKEVQHHRSQQAMTKSLYAIGMGLLGKSATNMDCANTNLESAGKSSSTNYNRNRFYNERFVPMASGTMPSVSGTNHHSRHQQLLLQQAPKCTADLNEKLVKINRQNANKELSTIQAKDMQSVDKNEEALKELQESIPEINKIFDVHCRIGSGTFSTVLLGTLQRERGLVETQRRRFAIKHHNPTNHPERILRELECMYRIGGVENVIGINCCIRYNDNVAFIMPYMTHDRFHDIYRSLNFPEIRDYLRNLLIALRHVHKFNVIHRDVKPSNILYNRRTGKFLLCDFGLAQRIADDGSVVQSSDLSSREVFSILRDLENGRSVTLTDGNSAQAEAEDYMARRRMRALGGGGSVERAVTGPPSIQKLREQAGGHLTKKDVANQRADTMRLLNRLRLVSPNADPNNYVVSTNTSKKEMHASRAGTPGYRPPEVLLRYPKQSTAVDVWAAGVIMLSLLSGLHPFFKAPHDCGALAEIINLFGDMPVRKTAFLLDRLILLAQKVNTLDLRRVCMRFRHADFFLAPEIQRKYQRPDGTTEMCRSCEQPTFNCLCSNSGHNLERYDGLDIFPAVAYDLLSRLLEVNPQKRITAEEALKHPFFSDQHRITPGIPLHQQQLIMHQQQHIMQHQQHLQRSRETLPSSAARTLKAFVCYPMEITSTASQAAGNI.

The region spanning 145 to 597 (FDVHCRIGSG…AEEALKHPFF (453 aa)) is the Protein kinase domain. Residues 151 to 159 (IGSGTFSTV) and Lys-181 contribute to the ATP site. Asp-268 (proton acceptor) is an active-site residue.

The protein belongs to the protein kinase superfamily. Ser/Thr protein kinase family. As to quaternary structure, interacts with chif (via N-terminus).

It catalyses the reaction L-seryl-[protein] + ATP = O-phospho-L-seryl-[protein] + ADP + H(+). It carries out the reaction L-threonyl-[protein] + ATP = O-phospho-L-threonyl-[protein] + ADP + H(+). Functionally, probable serine/threonine protein kinase that forms a complex with the N-terminal peptide of the chiffon protein and may be involved in regulating meiotic processes in the male testis. The chain is non-specific serine/threonine protein kinase from Drosophila melanogaster (Fruit fly).